Here is a 350-residue protein sequence, read N- to C-terminus: S-adenosylmethionine:tRNA ribosyltransferase-isomerase (350 aa).

The protein belongs to the QueA family. In terms of assembly, monomer.

The protein resides in the cytoplasm. The catalysed reaction is 7-aminomethyl-7-carbaguanosine(34) in tRNA + S-adenosyl-L-methionine = epoxyqueuosine(34) in tRNA + adenine + L-methionine + 2 H(+). It functions in the pathway tRNA modification; tRNA-queuosine biosynthesis. In terms of biological role, transfers and isomerizes the ribose moiety from AdoMet to the 7-aminomethyl group of 7-deazaguanine (preQ1-tRNA) to give epoxyqueuosine (oQ-tRNA). The protein is S-adenosylmethionine:tRNA ribosyltransferase-isomerase of Vibrio parahaemolyticus serotype O3:K6 (strain RIMD 2210633).